Consider the following 191-residue polypeptide: Succinoglycan biosynthesis protein ExoI (191 aa).

The tract at residues 1–21 (MTRIKSAVAAGGRRAPHSARL) is disordered.

It participates in glycan metabolism; exopolysaccharide biosynthesis. This is Succinoglycan biosynthesis protein ExoI (exoI) from Rhizobium meliloti (strain 1021) (Ensifer meliloti).